The chain runs to 230 residues: Cytidylate kinase (230 aa).

13–21 (GPAGTGKSS) provides a ligand contact to ATP.

This sequence belongs to the cytidylate kinase family. Type 1 subfamily.

The protein resides in the cytoplasm. It catalyses the reaction CMP + ATP = CDP + ADP. It carries out the reaction dCMP + ATP = dCDP + ADP. This is Cytidylate kinase from Mycobacterium tuberculosis (strain ATCC 25177 / H37Ra).